Here is a 681-residue protein sequence, read N- to C-terminus: T-box-containing protein 2 (681 aa).

A DNA-binding region (T-box) is located at residues 149–323; sequence LWDQFSRAGT…NNPFAKGFRE (175 aa). Disordered stretches follow at residues 316 to 351, 456 to 489, 521 to 558, and 589 to 611; these read PFAKGFREDGARAKKPRNQHNHFSDNDTSPYSEQRR, GITSHSPVQPVPHDNSFTYYNSSSPSSSDSNQSN, PNINIPNTVETNVHSSDSGIGSSPPTPSDDDASNLIPG, and ESGEANANSHTEDFSRNPACQSG. A compositionally biased stretch (low complexity) spans 470–489; it reads NSFTYYNSSSPSSSDSNQSN. The span at 521–534 shows a compositional bias: polar residues; the sequence is PNINIPNTVETNVH.

In terms of assembly, monomer. As to expression, differentiating muscle and tailbud tip.

It is found in the nucleus. In terms of biological role, involved in the transcriptional regulation of genes required for muscle differentiation. Binds to a palindromic site (called T site) and activates gene transcription when bound to such a site. This Halocynthia roretzi (Sea squirt) protein is T-box-containing protein 2 (T2).